The sequence spans 251 residues: Regulator of G-protein signaling 9-binding protein B (251 aa).

Residues 1–230 (MPLQNVKVAD…NSKGCCSDGQ (230 aa)) are Cytoplasmic-facing. Coiled-coil stretches lie at residues 52 to 94 (HLRD…ELER) and 158 to 187 (ANKA…MKVN). Residues 231–250 (LIVFLLLCGTALVAITLYSI) form a helical; Anchor for type IV membrane protein membrane-spanning segment. Position 251 (Leu251) is a topological domain, extracellular.

The protein belongs to the RGS7BP/RGS9BP family.

The protein resides in the membrane. Regulator of G protein-coupled receptor (GPCR) signaling. Probably acts by regulating the activity of some 'R7' family protein (RGS6, RGS7, RGS9 and/or RGS11). In Xenopus laevis (African clawed frog), this protein is Regulator of G-protein signaling 9-binding protein B (rgs9bp-b).